Consider the following 1534-residue polypeptide: MAKQDPKDKNSDSPNLSIPINNNNNENLDNDQELLNNNNNNNNNNNNNNNNNNNNNNNNNNNNNLISSSRKHKDEESNYDSDDEKSVYQIAKEHEGEDDGDDEYFPIPLDELMPNHENDELTKKIKQTRPEDKTGLYVYCRNATYTVKHRENKKVKIKLIDDISFYLKPKEMTLILGTPGCGKSTIFQMLAGQLKDKHFKGELLFNGHPINHKNHHRDISYVTQDDIHVPTLTVKETFRFALDCLGRKELTNEEKKETVDNCMNLLGLKESENTVVGDNFVRGISGGQKKRVTIGVGVIKGSNLLLMDEPTSGLDSSTSFEILSDVKKFVTYGYSPALITLLQPSVQLTSLFDNLMILNKGRICYFGPMNKALGYFKKLGFACPSHNNPAEFFQEVVDAPERYSFIHPPKCKTSKDFVRAYRESEFYKDLMEKMDANKDGIVDDNKPKVLVDSTAKELGMYPHGIGYQTKICMKRGFTMIRRNYYNFLTRVAKGIFFGLLLGTLYWRIGHNQSGGMERFGLLFFIMVTIIFSSFAAVNSFFGERKVFYSQKALYYYKTGAYFISSIICDIPAGILEVAFFGPIVYWLANLRPVFIRFVYFMLLLIMTDNLSLSFAKMCAAISPTIEIANVIASVILSIWLLFSGFTAPKNDIGGWWIWLYYISPYTWIFQGLSINEFTYQEYGCKTSELIPPRTPQNLLPYPEGFGGNQVCQFTSGEQIMDAFGITNPNYFKWVVFGILSAYIVFFYVVCFFALKYFNFEDKKSKLAVKKLKKKKKVKTTKQDEESAAISSEALERIDDDNDDDADYETEIKKKKSHKKQKEDTVIDVKSPSSLTTGSPYYNINNNNNNLSGSGNNIKKRKVKTPSNLSPSVNSPITINSPMPTSPSNNNNNNNSNEKSKNGKDIGSETGSYLQFKKLCYAVDVKVDDPDNPKKKKSQRLQLLTDIDGYVKPGQMLALMGPSGAGKSTLLDVLAQRKTGGHITGEILINGKPPSEFTNRIRAYVEQMDVLPPTQTVREAIAFSARCRLPPEVTKEERESYVDKIVEVLSLSSIKDLKIGVLGDGLSVSQRKRVNIGVELASNPEILFLDEPTSGLDSGDAFKVIDVVNKIAKVMNRTVICTVHQPSAAIFEFFDQLLLLKQGGETIYFGPLGNQSSVILDYCDKLGMHIKPHINPADFVMTLADQGKMVEGPNGEQVPLDAKKAYFESDICKKEYEIMEGQLIPDDFVIKTYDSRFASSWMTQFRALCMRSWLSRLRRPAIFVSNCIRSILLAVLLGTLFVRMDYEQKDARSRVSLLFFSFLFAGMVAIGNIPTTVLERGVFYREVTAGFYHSTAYMTSYVLTSYPFTLSTGILYIIPTFWIAGLDSGRHSSKFWYCLFIFIITYVMYDAFGLCLAVCLPNEVMASTICGIGLSLSTLFGGFVIARPNYPSAYYWCHYLDWLRYPLEASCTNEFTGLTFVCTNNKGAVPIPIIENGVQIAIKYYCPITNGDDFMLTYGFHKFMRYIDIAAIFGYIFIFVGLSFWGFKKIRWFNR.

Over residues 1–11 (MAKQDPKDKNS) the composition is skewed to basic and acidic residues. Residues 1–85 (MAKQDPKDKN…ESNYDSDDEK (85 aa)) are disordered. The span at 21-65 (NNNNNENLDNDQELLNNNNNNNNNNNNNNNNNNNNNNNNNNNNNL) shows a compositional bias: low complexity. The region spanning 138–385 (VYCRNATYTV…FKKLGFACPS (248 aa)) is the ABC transporter 1 domain. 177–184 (GTPGCGKS) provides a ligand contact to ATP. One can recognise an ABC transmembrane type-2 1 domain in the interval 481–757 (RRNYYNFLTR…VVCFFALKYF (277 aa)). A run of 7 helical transmembrane segments spans residues 486 to 506 (NFLT…TLYW), 521 to 541 (LLFF…NSFF), 566 to 586 (IICD…IVYW), 592 to 612 (PVFI…NLSL), 625 to 645 (IEIA…FSGF), 652 to 672 (IGGW…FQGL), and 734 to 754 (VVFG…FFAL). Residues 781–907 (KQDEESAAIS…KSKNGKDIGS (127 aa)) are disordered. Positions 797–808 (IDDDNDDDADYE) are enriched in acidic residues. Residues 830 to 841 (SPSSLTTGSPYY) show a composition bias toward polar residues. Low complexity predominate over residues 842–856 (NINNNNNNLSGSGNN). Residues 864-873 (TPSNLSPSVN) are compositionally biased toward polar residues. A compositionally biased stretch (low complexity) spans 874–896 (SPITINSPMPTSPSNNNNNNNSN). Basic and acidic residues predominate over residues 897–906 (EKSKNGKDIG). The ABC transporter 2 domain occupies 924–1166 (VKVDDPDNPK…VILDYCDKLG (243 aa)). 960 to 967 (GPSGAGKS) is an ATP binding site. Residues 1256 to 1529 (LRRPAIFVSN…GLSFWGFKKI (274 aa)) enclose the ABC transmembrane type-2 2 domain. Helical transmembrane passes span 1261-1281 (IFVS…TLFV), 1296-1316 (LLFF…PTTV), 1345-1365 (YPFT…IAGL), 1377-1397 (CLFI…CLAV), 1404-1424 (MAST…GFVI), and 1506-1526 (IDIA…FWGF).

The protein belongs to the ABC transporter superfamily. ABCG family. PDR (TC 3.A.1.205) subfamily.

Its subcellular location is the membrane. The protein is ABC transporter G family member 6 (abcG6) of Dictyostelium discoideum (Social amoeba).